The primary structure comprises 146 residues: Hemoglobin subunit beta-1/2 (146 aa).

Val-1 carries the post-translational modification N-acetylvaline. In terms of domain architecture, Globin spans 2 to 146 (HLTPDEKNAV…VATALAHKYH (145 aa)). The residue at position 44 (Ser-44) is a Phosphoserine. Lys-59 is subject to N6-acetyllysine. Residues His-63 and His-92 each contribute to the heme b site. Position 93 is an S-nitrosocysteine (Cys-93). An N6-acetyllysine modification is found at Lys-144.

This sequence belongs to the globin family. In terms of assembly, heterotetramer of two alpha chains and two beta chains. As to expression, red blood cells.

Involved in oxygen transport from the lung to the various peripheral tissues. This is Hemoglobin subunit beta-1/2 (HBB) from Otolemur crassicaudatus (Brown greater galago).